A 169-amino-acid chain; its full sequence is 3-hydroxyanthranilate 3,4-dioxygenase (169 aa).

Residue Arg-44 participates in O2 binding. His-48, Glu-54, and His-92 together coordinate Fe cation. Glu-54 is a substrate binding site. 2 residues coordinate substrate: Arg-96 and Glu-106. A divalent metal cation-binding residues include Cys-121, Cys-124, Cys-158, and Cys-160.

The protein belongs to the 3-HAO family. Requires Fe(2+) as cofactor.

It is found in the cytoplasm. The catalysed reaction is 3-hydroxyanthranilate + O2 = (2Z,4Z)-2-amino-3-carboxymuconate 6-semialdehyde. The protein operates within cofactor biosynthesis; NAD(+) biosynthesis; quinolinate from L-kynurenine: step 3/3. Catalyzes the oxidative ring opening of 3-hydroxyanthranilate to 2-amino-3-carboxymuconate semialdehyde, which spontaneously cyclizes to quinolinate. The sequence is that of 3-hydroxyanthranilate 3,4-dioxygenase from Meyerozyma guilliermondii (strain ATCC 6260 / CBS 566 / DSM 6381 / JCM 1539 / NBRC 10279 / NRRL Y-324) (Yeast).